Reading from the N-terminus, the 121-residue chain is Large ribosomal subunit protein bL12 (121 aa).

It belongs to the bacterial ribosomal protein bL12 family. As to quaternary structure, homodimer. Part of the ribosomal stalk of the 50S ribosomal subunit. Forms a multimeric L10(L12)X complex, where L10 forms an elongated spine to which 2 to 4 L12 dimers bind in a sequential fashion. Binds GTP-bound translation factors.

Forms part of the ribosomal stalk which helps the ribosome interact with GTP-bound translation factors. Is thus essential for accurate translation. The polypeptide is Large ribosomal subunit protein bL12 (Ureaplasma parvum serovar 3 (strain ATCC 27815 / 27 / NCTC 11736)).